A 409-amino-acid chain; its full sequence is CUB domain-containing protein (409 aa).

The signal sequence occupies residues 1 to 18; that stretch reads MFLFSLTVLSALVLITES. Positions 154 to 229 are enriched in low complexity; sequence TEASTTAQET…TTAPTTAPAP (76 aa). Positions 154-230 are disordered; that stretch reads TEASTTAQET…TAPTTAPAPI (77 aa). Cysteines 232 and 257 form a disulfide. Residues 232–338 enclose the CUB domain; it reads CGGVLRGRGT…QEYVDYYYYD (107 aa). The interval 389 to 409 is disordered; the sequence is VQGAADSESEASASSESSDED. Low complexity predominate over residues 392–409; sequence AADSESEASASSESSDED.

As to expression, component of the acid-insoluble and acid-soluble organic matrix of the aragonitic skeleton (at protein level).

It is found in the secreted. The protein is CUB domain-containing protein of Acropora millepora (Staghorn coral).